We begin with the raw amino-acid sequence, 513 residues long: ATP synthase subunit alpha (513 aa).

Residue 169-176 (GDRQIGKT) participates in ATP binding.

This sequence belongs to the ATPase alpha/beta chains family. In terms of assembly, F-type ATPases have 2 components, CF(1) - the catalytic core - and CF(0) - the membrane proton channel. CF(1) has five subunits: alpha(3), beta(3), gamma(1), delta(1), epsilon(1). CF(0) has three main subunits: a(1), b(2) and c(9-12). The alpha and beta chains form an alternating ring which encloses part of the gamma chain. CF(1) is attached to CF(0) by a central stalk formed by the gamma and epsilon chains, while a peripheral stalk is formed by the delta and b chains.

The protein localises to the cell inner membrane. It carries out the reaction ATP + H2O + 4 H(+)(in) = ADP + phosphate + 5 H(+)(out). Its function is as follows. Produces ATP from ADP in the presence of a proton gradient across the membrane. The alpha chain is a regulatory subunit. This Francisella tularensis subsp. tularensis (strain SCHU S4 / Schu 4) protein is ATP synthase subunit alpha.